The primary structure comprises 106 residues: Iron-sulfur cluster assembly protein CyaY (106 aa).

This sequence belongs to the frataxin family.

In terms of biological role, involved in iron-sulfur (Fe-S) cluster assembly. May act as a regulator of Fe-S biogenesis. This chain is Iron-sulfur cluster assembly protein CyaY, found in Shigella flexneri.